Reading from the N-terminus, the 136-residue chain is Large ribosomal subunit protein uL16 (136 aa).

Belongs to the universal ribosomal protein uL16 family. As to quaternary structure, part of the 50S ribosomal subunit.

Its function is as follows. Binds 23S rRNA and is also seen to make contacts with the A and possibly P site tRNAs. The sequence is that of Large ribosomal subunit protein uL16 from Shewanella woodyi (strain ATCC 51908 / MS32).